A 394-amino-acid polypeptide reads, in one-letter code: Chalcone synthase (394 aa).

The active site involves Cys168.

This sequence belongs to the thiolase-like superfamily. Chalcone/stilbene synthases family.

The catalysed reaction is (E)-4-coumaroyl-CoA + 3 malonyl-CoA + 3 H(+) = 2',4,4',6'-tetrahydroxychalcone + 3 CO2 + 4 CoA. It participates in secondary metabolite biosynthesis; flavonoid biosynthesis. The primary product of this enzyme is 4,2',4',6'-tetrahydroxychalcone (also termed naringenin-chalcone or chalcone) which can under specific conditions spontaneously isomerize into naringenin. In Raphanus sativus (Radish), this protein is Chalcone synthase (CHS).